An 86-amino-acid chain; its full sequence is Large ribosomal subunit protein uL23 (86 aa).

This sequence belongs to the universal ribosomal protein uL23 family. Part of the 50S ribosomal subunit. Contacts protein L29.

Its function is as follows. Binds to 23S rRNA. One of the proteins that surrounds the polypeptide exit tunnel on the outside of the ribosome. In Methanococcus aeolicus (strain ATCC BAA-1280 / DSM 17508 / OCM 812 / Nankai-3), this protein is Large ribosomal subunit protein uL23.